The following is a 574-amino-acid chain: Phosphoenolpyruvate-protein phosphotransferase (574 aa).

H190 acts as the Tele-phosphohistidine intermediate in catalysis. The phosphoenolpyruvate site is built by R297 and R333. Residues E432 and D456 each coordinate Mg(2+). Residues 455–456 (ND) and R466 contribute to the phosphoenolpyruvate site. C503 serves as the catalytic Proton donor.

It belongs to the PEP-utilizing enzyme family. As to quaternary structure, homodimer. Mg(2+) is required as a cofactor.

It localises to the cytoplasm. The enzyme catalyses L-histidyl-[protein] + phosphoenolpyruvate = N(pros)-phospho-L-histidyl-[protein] + pyruvate. Functionally, general (non sugar-specific) component of the phosphoenolpyruvate-dependent sugar phosphotransferase system (sugar PTS). This major carbohydrate active-transport system catalyzes the phosphorylation of incoming sugar substrates concomitantly with their translocation across the cell membrane. Enzyme I transfers the phosphoryl group from phosphoenolpyruvate (PEP) to the phosphoryl carrier protein (HPr). The chain is Phosphoenolpyruvate-protein phosphotransferase (ptsI) from Latilactobacillus sakei (Lactobacillus sakei).